A 72-amino-acid chain; its full sequence is Alpha-conotoxin SII (72 aa).

Residues 1-21 form the signal peptide; sequence MGMRMMFTVFLLVVLATTVVS. A propeptide spanning residues 22 to 50 is cleaved from the precursor; that stretch reads FPSDRASDGRDDEAKDERSDMHESDRNGR. The segment at 23 to 51 is disordered; it reads PSDRASDGRDDEAKDERSDMHESDRNGRG. Positions 26–49 are enriched in basic and acidic residues; sequence RASDGRDDEAKDERSDMHESDRNG. Intrachain disulfides connect C52/C68, C53/C58, and C54/C64. Positions 70 to 72 are excised as a propeptide; it reads RTL.

This sequence belongs to the conotoxin A superfamily. Post-translationally, the disulfide bond Cys-52-Cys-68 (Cys I-VI), which corresponds to an extra disulfide bond when compared to the cysteine framework I (CC-C-C), does contribute to conotoxin SII stability and imparts a unique binding mode at the nAChR. As to expression, expressed by the venom duct.

The protein localises to the secreted. Its function is as follows. Alpha-conotoxins act on postsynaptic membranes, they bind to the nicotinic acetylcholine receptors (nAChR) and thus inhibit them. This toxin potently inhibits the rodent muscle nAChR (IC(50)=120 nM (adult subtype, alpha-1-beta-1-delta-epsilon/CHRNA1-CHRNB1-CHRND-CHRNE) and IC(50)=370 nM (fetal subtype, alpha-1-beta-1-gamma-delta/CHRNA1-CHRNB1-CHRNG-CHRND)) and weakly inhibits neuronal nAChRs. In contrast to alpha-conotoxins bearing 2 disulfide bonds (framework I), this conotoxin acts via a unique binding mode with the helix and the N- and C-termini buried in the binding pocket of muscle nAChRs. The protein is Alpha-conotoxin SII of Conus striatus (Striated cone).